The sequence spans 195 residues: MPVIPYVVESNGREERTYDIYSRLLKDRIIFLGQQVDDQISNALVAQMLFLQADDPKKDIHMYINSPGGSITAGMAIYDTMQFVSCDVATYCIGQAASMGAVLLTAGAKGKRFALPNARIMIHQPLAGMQGTAREVEIHVAELRRIKQRMNEIMIEHTGHSLEKIEEDTDRDRFMSADEACSYGLIDKVVKSVDD.

The active-site Nucleophile is the Ser98. Residue His123 is part of the active site.

The protein belongs to the peptidase S14 family. In terms of assembly, fourteen ClpP subunits assemble into 2 heptameric rings which stack back to back to give a disk-like structure with a central cavity, resembling the structure of eukaryotic proteasomes.

The protein localises to the cytoplasm. It catalyses the reaction Hydrolysis of proteins to small peptides in the presence of ATP and magnesium. alpha-casein is the usual test substrate. In the absence of ATP, only oligopeptides shorter than five residues are hydrolyzed (such as succinyl-Leu-Tyr-|-NHMec, and Leu-Tyr-Leu-|-Tyr-Trp, in which cleavage of the -Tyr-|-Leu- and -Tyr-|-Trp bonds also occurs).. Cleaves peptides in various proteins in a process that requires ATP hydrolysis. Has a chymotrypsin-like activity. Plays a major role in the degradation of misfolded proteins. This Rhodopirellula baltica (strain DSM 10527 / NCIMB 13988 / SH1) protein is ATP-dependent Clp protease proteolytic subunit 2.